The primary structure comprises 247 residues: tRNA pseudouridine synthase A (247 aa).

Asp-53 (nucleophile) is an active-site residue. Substrate is bound at residue Tyr-112.

Belongs to the tRNA pseudouridine synthase TruA family. In terms of assembly, homodimer.

It carries out the reaction uridine(38/39/40) in tRNA = pseudouridine(38/39/40) in tRNA. Functionally, formation of pseudouridine at positions 38, 39 and 40 in the anticodon stem and loop of transfer RNAs. This is tRNA pseudouridine synthase A from Anaplasma marginale (strain St. Maries).